The chain runs to 322 residues: MSELFWFEKYRPRSFDEVVDLEEVKARLREFVRGGNMPHLLFYGPPGTGKTTMALVLARELYGEYWRENTLELNASDERGINVIRERVKEFARTAPVGKAPFKLVILDEADNMTSDAQQALRRIMEMYAQNTRFILLANYISGIIEPIQSRTVMIRFSPLPKEAVFARLRYIADNEGVKISDDALEAIYEFTQGDMRRAINALQIAATTGKEITEETVAKALGMVSPRLLRETLNDAFRGNFGKAATQIYGFVVDGGIGELEIVKQLHREALKLDVPEYLKPEIAYIIAEAHYAILRGAHGLTQIYGALAKIRKLLKYTASI.

44–51 (GPPGTGKT) serves as a coordination point for ATP.

This sequence belongs to the activator 1 small subunits family. RfcS subfamily. Heteromultimer composed of small subunits (RfcS) and large subunits (RfcL).

Its function is as follows. Part of the RFC clamp loader complex which loads the PCNA sliding clamp onto DNA. This Pyrobaculum arsenaticum (strain DSM 13514 / JCM 11321 / PZ6) protein is Replication factor C small subunit 2.